Reading from the N-terminus, the 594-residue chain is A-type ATP synthase subunit A (594 aa).

236–243 (GPFGSGKT) serves as a coordination point for ATP.

Belongs to the ATPase alpha/beta chains family. In terms of assembly, has multiple subunits with at least A(3), B(3), C, D, E, F, H, I and proteolipid K(x).

It localises to the cell membrane. It catalyses the reaction ATP + H2O + 4 H(+)(in) = ADP + phosphate + 5 H(+)(out). Component of the A-type ATP synthase that produces ATP from ADP in the presence of a proton gradient across the membrane. The A chain is the catalytic subunit. The sequence is that of A-type ATP synthase subunit A from Pyrobaculum neutrophilum (strain DSM 2338 / JCM 9278 / NBRC 100436 / V24Sta) (Thermoproteus neutrophilus).